The following is a 499-amino-acid chain: Tetrathionate hydrolase (499 aa).

An N-terminal signal peptide occupies residues 1–32 (MPSIVRNHGPHNKILLSALLLALFGWVPLASA).

Belongs to the tetrathionate hydrolase family. As to quaternary structure, homodimer.

The protein localises to the cell membrane. The catalysed reaction is tetrathionate + H2O = sulfur + thiosulfate + sulfate + H(+). In terms of biological role, catalyzes the hydrolysis of tetrathionate to generate elemental sulfur, thiosulfate and sulfate. This is Tetrathionate hydrolase from Acidithiobacillus ferrooxidans (strain ATCC 23270 / DSM 14882 / CIP 104768 / NCIMB 8455) (Ferrobacillus ferrooxidans (strain ATCC 23270)).